The chain runs to 291 residues: Serine hydrolase BPHL (291 aa).

Positions 1 to 37 (MVAVLGGRGVLRLRLLLSALKPGIHVPRAGPAAAFGT) are cleaved as a signal peptide. The AB hydrolase-1 domain maps to 62–181 (AVLLLPGMLG…DSMIYEGIRD (120 aa)). An N6-acetyllysine mark is found at K86 and K119. At K126 the chain carries N6-acetyllysine; alternate. K126 is subject to N6-succinyllysine; alternate. The active-site Nucleophile is the S139. At K184 the chain carries N6-succinyllysine. An N6-acetyllysine; alternate modification is found at K191. Residue K191 is modified to N6-succinyllysine; alternate. Position 217 is an N6-acetyllysine (K217). Residue D221 coordinates Mg(2+). An N6-acetyllysine modification is found at K243. The Charge relay system role is filled by D244. Residues K260 and K271 each carry the N6-acetyllysine; alternate modification. Residues K260 and K271 each carry the N6-succinyllysine; alternate modification. H272 acts as the Charge relay system in catalysis.

It belongs to the AB hydrolase superfamily. Lipase family. As to quaternary structure, monomer. May also form homodimers. As to expression, expressed at high levels in liver and kidney and lower levels in heart, intestine and skeletal muscle.

The protein resides in the mitochondrion. The enzyme catalyses L-homocysteine thiolactone + H2O = L-homocysteine + H(+). The catalysed reaction is valacyclovir + H2O = acyclovir + L-valine + H(+). Specific alpha-amino acid ester serine hydrolase that prefers small, hydrophobic, and aromatic side chains and does not have a stringent requirement for the leaving group other than preferring a primary alcohol. Has homocysteine-thiolactonase activity (in vitro) and may play a significant role in the detoxification of homocysteine thiolactone in vivo. Catalyzes the hydrolytic activation of amino acid ester prodrugs of nucleoside analogs such as valacyclovir and valganciclovir, converting them into their active forms (acyclovir and ganciclovir). The sequence is that of Serine hydrolase BPHL (BPHL) from Homo sapiens (Human).